Consider the following 968-residue polypeptide: RNA polymerase-associated protein RapA (968 aa).

A Helicase ATP-binding domain is found at D164–N334. Position 177–184 (D177–T184) interacts with ATP. The DEAH box motif lies at D280–H283. Residues R490–G662 enclose the Helicase C-terminal domain.

Belongs to the SNF2/RAD54 helicase family. RapA subfamily. In terms of assembly, interacts with the RNAP. Has a higher affinity for the core RNAP than for the holoenzyme. Its ATPase activity is stimulated by binding to RNAP.

Functionally, transcription regulator that activates transcription by stimulating RNA polymerase (RNAP) recycling in case of stress conditions such as supercoiled DNA or high salt concentrations. Probably acts by releasing the RNAP, when it is trapped or immobilized on tightly supercoiled DNA. Does not activate transcription on linear DNA. Probably not involved in DNA repair. This chain is RNA polymerase-associated protein RapA, found in Shigella flexneri serotype 5b (strain 8401).